The chain runs to 205 residues: MQRPEAWPRPHPGEGASAAQAGGAAPPTRATEQREPSLYTIKAVFILDNDGRRLLAKYYDDTFPSVKEQMVFEKNVFNKTSRTESEIAFLGGMTIVYKSSIDIFLYVVGSSSENELMLMSVLACLFDSLSHILRKNVEKRWLLENMDGAFLVLDETVDGGVILESDPQQVIQKVNFRTDDSGLTEQSVAQVLQSAKEQIKWSLLK.

Residues 1–12 show a composition bias toward basic and acidic residues; the sequence is MQRPEAWPRPHP. The interval 1 to 33 is disordered; the sequence is MQRPEAWPRPHPGEGASAAQAGGAAPPTRATEQ. Positions 13–30 are enriched in low complexity; that stretch reads GEGASAAQAGGAAPPTRA.

The protein belongs to the adaptor complexes small subunit family. In terms of assembly, oligomeric complex.

The protein resides in the cytoplasm. It is found in the cytosol. The protein localises to the endoplasmic reticulum-Golgi intermediate compartment membrane. Its subcellular location is the golgi apparatus membrane. It localises to the cytoplasmic vesicle. The protein resides in the COPI-coated vesicle membrane. The coatomer is a cytosolic protein complex that binds to dilysine motifs and reversibly associates with Golgi non-clathrin-coated vesicles, which further mediate biosynthetic protein transport from the ER, via the Golgi up to the trans Golgi network. Coatomer complex is required for budding from Golgi membranes, and is essential for the retrograde Golgi-to-ER transport of dilysine-tagged proteins. The zeta subunit may be involved in regulating the coat assembly and, hence, the rate of biosynthetic protein transport due to its association-dissociation properties with the coatomer complex. This is Coatomer subunit zeta-2 (Copz2) from Mus musculus (Mouse).